A 182-amino-acid chain; its full sequence is ATP-dependent protease subunit HslV (182 aa).

The active site involves threonine 12. The Na(+) site is built by alanine 167, cysteine 170, and threonine 173.

Belongs to the peptidase T1B family. HslV subfamily. In terms of assembly, a double ring-shaped homohexamer of HslV is capped on each side by a ring-shaped HslU homohexamer. The assembly of the HslU/HslV complex is dependent on binding of ATP.

Its subcellular location is the cytoplasm. The enzyme catalyses ATP-dependent cleavage of peptide bonds with broad specificity.. With respect to regulation, allosterically activated by HslU binding. Protease subunit of a proteasome-like degradation complex believed to be a general protein degrading machinery. The protein is ATP-dependent protease subunit HslV of Paramagnetospirillum magneticum (strain ATCC 700264 / AMB-1) (Magnetospirillum magneticum).